The chain runs to 685 residues: Polyphosphate kinase (685 aa).

Asn-45 is an ATP binding site. Arg-375 and Arg-405 together coordinate Mg(2+). His-435 acts as the Phosphohistidine intermediate in catalysis. ATP-binding residues include Tyr-468, Arg-564, and His-592.

This sequence belongs to the polyphosphate kinase 1 (PPK1) family. Mg(2+) serves as cofactor. An intermediate of this reaction is the autophosphorylated ppk in which a phosphate is covalently linked to a histidine residue through a N-P bond.

It carries out the reaction [phosphate](n) + ATP = [phosphate](n+1) + ADP. Its function is as follows. Catalyzes the reversible transfer of the terminal phosphate of ATP to form a long-chain polyphosphate (polyP). The chain is Polyphosphate kinase from Neisseria meningitidis serogroup B (strain ATCC BAA-335 / MC58).